We begin with the raw amino-acid sequence, 468 residues long: Aldehyde dehydrogenase family 3 member B1 (468 aa).

M1 carries the N-acetylmethionine modification. An NAD(+)-binding site is contributed by G188–G193. Active-site residues include E210 and C244. C463 carries S-palmitoyl cysteine lipidation. Position 465 is a cysteine methyl ester (C465). C465 carries the S-geranylgeranyl cysteine lipid modification. Residues T466–L468 constitute a propeptide, removed in mature form.

The protein belongs to the aldehyde dehydrogenase family. Dually lipidated in the C-terminus; prenylation occurs prior to, and is a prerequisite for palmitoylation. It is also required for activity towards long-chain substrates.

Its subcellular location is the cell membrane. The enzyme catalyses an aldehyde + NAD(+) + H2O = a carboxylate + NADH + 2 H(+). The catalysed reaction is a long-chain fatty aldehyde + NAD(+) + H2O = a long-chain fatty acid + NADH + 2 H(+). It catalyses the reaction a medium-chain fatty aldehyde + NAD(+) + H2O = a medium-chain fatty acid + NADH + 2 H(+). It carries out the reaction octanal + NAD(+) + H2O = octanoate + NADH + 2 H(+). The enzyme catalyses nonanal + NAD(+) + H2O = nonanoate + NADH + 2 H(+). The catalysed reaction is hexadecanoate + NADH + 2 H(+) = hexadecanal + NAD(+) + H2O. It catalyses the reaction (2E)-octenal + NAD(+) + H2O = (2E)-octenoate + NADH + 2 H(+). It carries out the reaction (E)-non-2-enal + NAD(+) + H2O = (E)-non-2-enoate + NADH + 2 H(+). The enzyme catalyses (E)-4-hydroxynon-2-enal + NAD(+) + H2O = (E)-4-hydroxynon-2-enoate + NADH + 2 H(+). The catalysed reaction is (2E)-hexadecenal + NAD(+) + H2O = (E)-hexadec-2-enoate + NADH + 2 H(+). It catalyses the reaction benzaldehyde + NAD(+) + H2O = benzoate + NADH + 2 H(+). It carries out the reaction an aldehyde + NADP(+) + H2O = a carboxylate + NADPH + 2 H(+). The enzyme catalyses a medium-chain fatty aldehyde + NADP(+) + H2O = a medium-chain fatty acid + NADPH + 2 H(+). The catalysed reaction is hexanal + NADP(+) + H2O = hexanoate + NADPH + 2 H(+). It catalyses the reaction octanal + NADP(+) + H2O = octanoate + NADPH + 2 H(+). It carries out the reaction nonanal + NADP(+) + H2O = nonanoate + NADPH + 2 H(+). The enzyme catalyses (2E)-octenal + NADP(+) + H2O = (2E)-octenoate + NADPH + 2 H(+). The catalysed reaction is (E)-non-2-enal + NADP(+) + H2O = (E)-non-2-enoate + NADPH + 2 H(+). It catalyses the reaction (E)-4-hydroxynon-2-enal + NADP(+) + H2O = (E)-4-hydroxynon-2-enoate + NADPH + 2 H(+). It carries out the reaction benzaldehyde + NADP(+) + H2O = benzoate + NADPH + 2 H(+). It participates in alcohol metabolism; ethanol degradation; acetate from ethanol: step 2/2. Functionally, oxidizes medium and long chain saturated and unsaturated fatty aldehydes generated in the plasma membrane into non-toxic fatty acids. May have a protective role against the cytotoxicity induced by lipid peroxidation. Short-chain fatty aldehydes are not good substrates. Can use both NADP(+) and NAD(+) as electron acceptor in vitro, however in vivo preference will depend on their tissue levels. Low activity towards acetaldehyde and 3,4-dihydroxyphenylacetaldehyde. Able to metabolize aromatic aldehydes such as benzaldehyde to their acid form. The polypeptide is Aldehyde dehydrogenase family 3 member B1 (ALDH3B1) (Bos taurus (Bovine)).